The primary structure comprises 356 residues: Inositol monophosphatase 3 (356 aa).

A helical transmembrane segment spans residues 11–31; the sequence is LGIGVFCLLGLGVLYHVYSGF. Residues E127, D167, L169, D170, and D293 each coordinate Mg(2+). A substrate-binding site is contributed by E127. Substrate-binding positions include 169-172 and D293; that span reads LDAT.

This sequence belongs to the inositol monophosphatase superfamily. Requires Mg(2+) as cofactor.

Its subcellular location is the membrane. It carries out the reaction a myo-inositol phosphate + H2O = myo-inositol + phosphate. It functions in the pathway polyol metabolism; myo-inositol biosynthesis; myo-inositol from D-glucose 6-phosphate: step 2/2. This Xenopus tropicalis (Western clawed frog) protein is Inositol monophosphatase 3 (bpnt2).